The following is a 626-amino-acid chain: Phosphomethylpyrimidine synthase (626 aa).

Residues 1-22 form a disordered region; that stretch reads MTKQEKAINLSESAQVDQQSVQ. Polar residues predominate over residues 10-22; that stretch reads LSESAQVDQQSVQ. Residues Asn-232, Met-261, Tyr-290, His-326, 346 to 348, 387 to 390, and Glu-426 each bind substrate; these read SRG and DGLR. Zn(2+) is bound at residue His-430. Position 453 (Tyr-453) interacts with substrate. His-494 lines the Zn(2+) pocket. Residues Cys-574, Cys-577, and Cys-582 each coordinate [4Fe-4S] cluster.

It belongs to the ThiC family. As to quaternary structure, homodimer. The cofactor is [4Fe-4S] cluster.

It carries out the reaction 5-amino-1-(5-phospho-beta-D-ribosyl)imidazole + S-adenosyl-L-methionine = 4-amino-2-methyl-5-(phosphooxymethyl)pyrimidine + CO + 5'-deoxyadenosine + formate + L-methionine + 3 H(+). It participates in cofactor biosynthesis; thiamine diphosphate biosynthesis. Its function is as follows. Catalyzes the synthesis of the hydroxymethylpyrimidine phosphate (HMP-P) moiety of thiamine from aminoimidazole ribotide (AIR) in a radical S-adenosyl-L-methionine (SAM)-dependent reaction. In Pseudomonas putida (strain ATCC 47054 / DSM 6125 / CFBP 8728 / NCIMB 11950 / KT2440), this protein is Phosphomethylpyrimidine synthase.